The following is a 597-amino-acid chain: Hydrogenase-1 large chain (597 aa).

Residues Cys76, Cys79, Cys576, and Cys579 each contribute to the Ni(2+) site.

It belongs to the [NiFe]/[NiFeSe] hydrogenase large subunit family. As to quaternary structure, heterodimer of a large and a small subunit. Requires Ni(2+) as cofactor.

Its subcellular location is the cell membrane. The catalysed reaction is H2 + A = AH2. This is one of three E.coli hydrogenases synthesized in response to different physiological conditions. HYD1 is believed to have a role in hydrogen cycling during fermentative growth. This chain is Hydrogenase-1 large chain (hyaB), found in Escherichia coli (strain K12).